We begin with the raw amino-acid sequence, 671 residues long: MIERIADRKFDLVSPYQPAGDQPQAIAKLTKGFEEGKKEQILLGATGTGKTFTMSNIIANLNKPTLILSHNKTLAGQLYGEFKEFFPHNAVEYFVSYYDYYQPEAYVPSTDTYIEKDSAINDEIDKLRHSATSALLERNDVIVVASVSSIFGLGDPHEYKNHVLSLRTGMTIDRNTLLRQLVDIQFDRNDIDFQRGRFRVRGDVVEIFPASRDDHAIRVEFFGDEIDRITEVDALTGEVIGTRDHVAIFPATHFMTSDEQMQRAIKSIAAELEAQLKVLRSENKLLEAQRLEQRTNYDIEMMREMGFTSGIENYSRHMDGRKPGEPPYTLLDFFPKDFNIMVDESHVTMPQIRGMYNGDRARKQMLVNYGFRLPSALDNRPLKINEFEQHVHRILYVSATPGPYELDRVPKDDIAEQIIRPTGLLDPKIEVRPVMGQIDDLVGEINKRVDAHERVFITTLTKKMAEDLTDYLKDMGIKVRYLHSDIKTLERTQIIRDLRLGKFDVLIGINLLREGIDVPEVSLIAILDADKEGFLRAERSLIQTIGRASRNEHGKVIMYADKVTDSMKAAIDETQRRRTIQEKFNEEHHITPKTIIKPIRAAISSYEQSDDDKAEAKKTFAEVDYEDMSKADKKELVANLRSQMQAAAKKLDFEQAASLRDTILELQADMS.

Residues 31–189 form the Helicase ATP-binding domain; it reads KGFEEGKKEQ…QLVDIQFDRN (159 aa). An ATP-binding site is contributed by 44 to 51; the sequence is GATGTGKT. The short motif at 97–120 is the Beta-hairpin element; it reads YYDYYQPEAYVPSTDTYIEKDSAI. The Helicase C-terminal domain occupies 437 to 599; it reads QIDDLVGEIN…ITPKTIIKPI (163 aa). The UVR domain occupies 634–669; the sequence is KELVANLRSQMQAAAKKLDFEQAASLRDTILELQAD.

This sequence belongs to the UvrB family. In terms of assembly, forms a heterotetramer with UvrA during the search for lesions. Interacts with UvrC in an incision complex.

It localises to the cytoplasm. The UvrABC repair system catalyzes the recognition and processing of DNA lesions. A damage recognition complex composed of 2 UvrA and 2 UvrB subunits scans DNA for abnormalities. Upon binding of the UvrA(2)B(2) complex to a putative damaged site, the DNA wraps around one UvrB monomer. DNA wrap is dependent on ATP binding by UvrB and probably causes local melting of the DNA helix, facilitating insertion of UvrB beta-hairpin between the DNA strands. Then UvrB probes one DNA strand for the presence of a lesion. If a lesion is found the UvrA subunits dissociate and the UvrB-DNA preincision complex is formed. This complex is subsequently bound by UvrC and the second UvrB is released. If no lesion is found, the DNA wraps around the other UvrB subunit that will check the other stand for damage. This is UvrABC system protein B from Lacticaseibacillus casei (strain BL23) (Lactobacillus casei).